Reading from the N-terminus, the 655-residue chain is Macrolide export ATP-binding/permease protein MacB (655 aa).

Positions 6–244 constitute an ABC transporter domain; sequence IVLRGLRREY…VAAPTAAAAQ (239 aa). 42–49 provides a ligand contact to ATP; that stretch reads GASGSGKS. 4 helical membrane passes run 279 to 299, 528 to 548, 579 to 599, and 618 to 638; these read FLTM…VAVG, LTLM…IGVM, FLIE…AVAY, and AGSI…FGYL.

It belongs to the ABC transporter superfamily. Macrolide exporter (TC 3.A.1.122) family. As to quaternary structure, homodimer.

The protein resides in the cell inner membrane. Non-canonical ABC transporter that contains transmembrane domains (TMD), which form a pore in the inner membrane, and an ATP-binding domain (NBD), which is responsible for energy generation. Confers resistance against macrolides. The sequence is that of Macrolide export ATP-binding/permease protein MacB from Rhodopseudomonas palustris (strain BisB18).